The sequence spans 120 residues: Ribosome-binding factor A (120 aa).

This sequence belongs to the RbfA family. In terms of assembly, monomer. Binds 30S ribosomal subunits, but not 50S ribosomal subunits or 70S ribosomes.

The protein localises to the cytoplasm. In terms of biological role, one of several proteins that assist in the late maturation steps of the functional core of the 30S ribosomal subunit. Associates with free 30S ribosomal subunits (but not with 30S subunits that are part of 70S ribosomes or polysomes). Required for efficient processing of 16S rRNA. May interact with the 5'-terminal helix region of 16S rRNA. The sequence is that of Ribosome-binding factor A from Campylobacter jejuni subsp. jejuni serotype O:6 (strain 81116 / NCTC 11828).